The sequence spans 353 residues: Dihydroorotate dehydrogenase (quinone) (353 aa).

Residues 66 to 70 (AGFDK) and Thr90 contribute to the FMN site. Lys70 is a binding site for substrate. 115–119 (NRMGF) lines the substrate pocket. FMN contacts are provided by Asn143 and Asn176. Asn176 contacts substrate. The active-site Nucleophile is Ser179. Asn181 is a binding site for substrate. Residues Lys212 and Thr240 each coordinate FMN. Residue 241-242 (NT) coordinates substrate. FMN-binding positions include Gly264, Gly293, and 314–315 (YT).

It belongs to the dihydroorotate dehydrogenase family. Type 2 subfamily. Monomer. FMN is required as a cofactor.

It localises to the cell membrane. It catalyses the reaction (S)-dihydroorotate + a quinone = orotate + a quinol. The protein operates within pyrimidine metabolism; UMP biosynthesis via de novo pathway; orotate from (S)-dihydroorotate (quinone route): step 1/1. Functionally, catalyzes the conversion of dihydroorotate to orotate with quinone as electron acceptor. The chain is Dihydroorotate dehydrogenase (quinone) from Mycolicibacterium gilvum (strain PYR-GCK) (Mycobacterium gilvum (strain PYR-GCK)).